Consider the following 342-residue polypeptide: Oxygen-dependent coproporphyrinogen-III oxidase (342 aa).

Ser-98 is a binding site for substrate. Positions 102 and 112 each coordinate a divalent metal cation. The active-site Proton donor is His-112. Position 114-116 (114-116) interacts with substrate; the sequence is NYR. A divalent metal cation contacts are provided by His-146 and His-176. The important for dimerization stretch occupies residues 266 to 301; sequence YVEFNLVWDRGTIFGLQTNGRTESILMSLPPLARWE.

The protein belongs to the aerobic coproporphyrinogen-III oxidase family. In terms of assembly, homodimer. A divalent metal cation serves as cofactor.

It is found in the cytoplasm. The enzyme catalyses coproporphyrinogen III + O2 + 2 H(+) = protoporphyrinogen IX + 2 CO2 + 2 H2O. It functions in the pathway porphyrin-containing compound metabolism; protoporphyrin-IX biosynthesis; protoporphyrinogen-IX from coproporphyrinogen-III (O2 route): step 1/1. Functionally, involved in the heme and chlorophyll biosynthesis. Catalyzes the aerobic oxidative decarboxylation of propionate groups of rings A and B of coproporphyrinogen-III to yield the vinyl groups in protoporphyrinogen-IX. In Prochlorococcus marinus (strain AS9601), this protein is Oxygen-dependent coproporphyrinogen-III oxidase.